We begin with the raw amino-acid sequence, 740 residues long: D-ornithine 4,5-aminomutase subunit beta (740 aa).

Substrate-binding positions include E81, Y160, H182, and 294-296 (RAQ). A B12-binding domain is found at 602-739 (PLKIVAATVG…VKKRREMREG (138 aa)). Adenosylcob(III)alamin-binding positions include 614–616 (EHS) and H615. Position 626 is an N6-(pyridoxal phosphate)lysine (K626). Adenosylcob(III)alamin is bound by residues 664–669 (STIISH), T700, and S720.

In terms of assembly, heterotetramer of 2 alpha (OraS) and 2 beta (OraE) subunits. The cofactor is adenosylcob(III)alamin. Pyridoxal 5'-phosphate serves as cofactor.

The enzyme catalyses D-ornithine = (2R,4S)-2,4-diaminopentanoate. Its activity is regulated as follows. Increased activity in the presence of dithiothreitol (DTT) in vitro. Inhibited by 1 mM potassium phosphate and potassium chloride. Inhibited by L-alpha-ornithine, D,L-alpha-lysine, L-beta-lysine (50%-60%), L-alpha-lysine (26%) and by delta-amino-n-valeric acid to a lesser extent. Significant decrease in activity is observed in the presence of 0.2 mM p-chloromercuribenzoate, N-ethylmaleimide and also by 2 mM iodoacetate to a lesser extent but not inhibited by arsenite. Its function is as follows. Component of a complex that catalyzes the reversible migration of the omega amino group of D-ornithine to C-4 to form (2R,4S)-2,4-diaminopentanoic acid. OraE may be the catalytic subunit. Active only on D-ornithine and 2,4-diaminopentanoic acid but not active on L-ornithine, L-beta-lysine, L-alpha-lysine or D-alpha-lysine. The protein is D-ornithine 4,5-aminomutase subunit beta (oraE) of Acetoanaerobium sticklandii (strain ATCC 12662 / DSM 519 / JCM 1433 / CCUG 9281 / NCIMB 10654 / HF) (Clostridium sticklandii).